A 79-amino-acid chain; its full sequence is MATKKEEVKFEDNLAELENIVRKLESGDVALEDAIAEFQKGMKISETLKKTLNEAEQTLVKIVGKDDNESEFSAEQKEY.

This sequence belongs to the XseB family. In terms of assembly, heterooligomer composed of large and small subunits.

Its subcellular location is the cytoplasm. It carries out the reaction Exonucleolytic cleavage in either 5'- to 3'- or 3'- to 5'-direction to yield nucleoside 5'-phosphates.. Functionally, bidirectionally degrades single-stranded DNA into large acid-insoluble oligonucleotides, which are then degraded further into small acid-soluble oligonucleotides. This Lactococcus lactis subsp. cremoris (strain MG1363) protein is Exodeoxyribonuclease 7 small subunit.